A 67-amino-acid polypeptide reads, in one-letter code: Small, acid-soluble spore protein 2 (67 aa).

This sequence belongs to the alpha/beta-type SASP family.

SASP are bound to spore DNA. They are double-stranded DNA-binding proteins that cause DNA to change to an a-like conformation. They protect the DNA backbone from chemical and enzymatic cleavage and are thus involved in dormant spore's high resistance to UV light. This Sporosarcina ureae protein is Small, acid-soluble spore protein 2 (Su-2).